We begin with the raw amino-acid sequence, 964 residues long: Glycine dehydrogenase (decarboxylating) (964 aa).

The span at 1–10 (MNSTLQNRNR) shows a compositional bias: polar residues. Residues 1 to 25 (MNSTLQNRNRTNLERVSTDPLDTFP) form a disordered region. K713 carries the post-translational modification N6-(pyridoxal phosphate)lysine.

It belongs to the GcvP family. As to quaternary structure, the glycine cleavage system is composed of four proteins: P, T, L and H. The cofactor is pyridoxal 5'-phosphate.

It catalyses the reaction N(6)-[(R)-lipoyl]-L-lysyl-[glycine-cleavage complex H protein] + glycine + H(+) = N(6)-[(R)-S(8)-aminomethyldihydrolipoyl]-L-lysyl-[glycine-cleavage complex H protein] + CO2. Its function is as follows. The glycine cleavage system catalyzes the degradation of glycine. The P protein binds the alpha-amino group of glycine through its pyridoxal phosphate cofactor; CO(2) is released and the remaining methylamine moiety is then transferred to the lipoamide cofactor of the H protein. This Leptospira borgpetersenii serovar Hardjo-bovis (strain JB197) protein is Glycine dehydrogenase (decarboxylating).